Consider the following 137-residue polypeptide: ATP synthase epsilon chain (137 aa).

Belongs to the ATPase epsilon chain family. As to quaternary structure, F-type ATPases have 2 components, CF(1) - the catalytic core - and CF(0) - the membrane proton channel. CF(1) has five subunits: alpha(3), beta(3), gamma(1), delta(1), epsilon(1). CF(0) has three main subunits: a, b and c.

The protein localises to the cell membrane. Produces ATP from ADP in the presence of a proton gradient across the membrane. This is ATP synthase epsilon chain from Thermobifida fusca (strain YX).